A 568-amino-acid chain; its full sequence is WW domain-containing protein A (568 aa).

The C2 domain maps to 6-129; that stretch reads PLNNSNGSNS…TGPISHDVVF (124 aa). Residues 325-359 form the WW 1 domain; the sequence is VKLPDGWESRIDPVSGKVFYLNHNNKTTSWISPLE. A disordered region spans residues 376–461; the sequence is TILDNNNNNN…SRPKKTPATP (86 aa). Positions 380–418 are enriched in low complexity; sequence NNNNNNNNNNNNNNNNNNNNNNINNTNNIQQKQQAQQQP. Basic and acidic residues predominate over residues 435-451; sequence QKEKEKEKEINAEDYKI. The 34-residue stretch at 519 to 552 folds into the WW 2 domain; that stretch reads QGLPNGWEVRQDQFGRVFYVDHINRATTWTRPTV.

As to quaternary structure, interacts with calmodulin in the absence of Ca(2+).

It localises to the nucleus. The protein localises to the nucleolus. Its subcellular location is the cytoplasm. It is found in the cell cortex. The protein resides in the cytoskeleton. Its function is as follows. Involved in regulation of actin cytoskeleton organization and cytokinesis. The protein is WW domain-containing protein A of Dictyostelium discoideum (Social amoeba).